A 1233-amino-acid chain; its full sequence is uncharacterized protein (1233 aa).

Disordered regions lie at residues 32 to 51 (SETS…TPKP), 510 to 529 (ATTN…PVPD), and 882 to 915 (EVIE…IERS). Composition is skewed to acidic residues over residues 513–529 (NEEE…PVPD) and 882–905 (EVIE…EDEG). Over residues 906-915 (DNKQRVIERS) the composition is skewed to basic and acidic residues.

This is an uncharacterized protein from Dictyostelium discoideum (Social amoeba).